The sequence spans 377 residues: tRNA-specific 2-thiouridylase MnmA (377 aa).

ATP contacts are provided by residues 12-19 (GMSGGVDS) and Met38. An interaction with target base in tRNA region spans residues 98-100 (NPD). The active-site Nucleophile is Cys103. A disulfide bridge links Cys103 with Cys200. Gly127 lines the ATP pocket. The tract at residues 150–152 (KDQ) is interaction with tRNA. Cys200 acts as the Cysteine persulfide intermediate in catalysis. Residues 314-315 (RY) form an interaction with tRNA region.

It belongs to the MnmA/TRMU family.

It is found in the cytoplasm. It catalyses the reaction S-sulfanyl-L-cysteinyl-[protein] + uridine(34) in tRNA + AH2 + ATP = 2-thiouridine(34) in tRNA + L-cysteinyl-[protein] + A + AMP + diphosphate + H(+). Functionally, catalyzes the 2-thiolation of uridine at the wobble position (U34) of tRNA, leading to the formation of s(2)U34. This is tRNA-specific 2-thiouridylase MnmA from Limosilactobacillus reuteri (strain DSM 20016) (Lactobacillus reuteri).